Reading from the N-terminus, the 382-residue chain is Mannitol-1-phosphate 5-dehydrogenase (382 aa).

An NAD(+)-binding site is contributed by 3–14; the sequence is ALHFGAGNIGRG.

The protein belongs to the mannitol dehydrogenase family.

The catalysed reaction is D-mannitol 1-phosphate + NAD(+) = beta-D-fructose 6-phosphate + NADH + H(+). This Cronobacter sakazakii (strain ATCC BAA-894) (Enterobacter sakazakii) protein is Mannitol-1-phosphate 5-dehydrogenase.